An 84-amino-acid polypeptide reads, in one-letter code: Cell division topological specificity factor (84 aa).

It belongs to the MinE family.

In terms of biological role, prevents the cell division inhibition by proteins MinC and MinD at internal division sites while permitting inhibition at polar sites. This ensures cell division at the proper site by restricting the formation of a division septum at the midpoint of the long axis of the cell. The protein is Cell division topological specificity factor of Pseudomonas fluorescens (strain Pf0-1).